A 200-amino-acid polypeptide reads, in one-letter code: Small ribosomal subunit protein uS4 (200 aa).

A disordered region spans residues 22–43 (TGKELERRPYAPGQHGPTQRKK). Residues 92–170 (QRLDNIVYRL…VPEYVTFDAE (79 aa)) enclose the S4 RNA-binding domain.

It belongs to the universal ribosomal protein uS4 family. As to quaternary structure, part of the 30S ribosomal subunit. Contacts protein S5. The interaction surface between S4 and S5 is involved in control of translational fidelity.

One of the primary rRNA binding proteins, it binds directly to 16S rRNA where it nucleates assembly of the body of the 30S subunit. Its function is as follows. With S5 and S12 plays an important role in translational accuracy. The chain is Small ribosomal subunit protein uS4 from Listeria innocua serovar 6a (strain ATCC BAA-680 / CLIP 11262).